The primary structure comprises 104 residues: Large ribosomal subunit protein uL24 (104 aa).

The protein belongs to the universal ribosomal protein uL24 family. Part of the 50S ribosomal subunit.

In terms of biological role, one of two assembly initiator proteins, it binds directly to the 5'-end of the 23S rRNA, where it nucleates assembly of the 50S subunit. Its function is as follows. One of the proteins that surrounds the polypeptide exit tunnel on the outside of the subunit. This is Large ribosomal subunit protein uL24 from Hydrogenovibrio crunogenus (strain DSM 25203 / XCL-2) (Thiomicrospira crunogena).